A 3354-amino-acid chain; its full sequence is MGRHVATSCHVAWLLVLISGCWGQVNRLPFFTNHFFDTYLLISEDTPVGSSVTQLLAQDMDNDPLVFGVSGEEASRFFAVEPDTGVVWLRQPLDRETKSEFTVEFSVSDHQGVITRKVNIQVGDVNDNAPTFHNQPYSVRIPENTPVGTPIFIVNATDPDLGAGGSVLYSFQPPSQFFAIDSARGIVTVIRELDYETTQAYQLTVNATDQDKTRPLSTLANLAIIITDVQDMDPIFINLPYSTNIYEHSPPGTTVRIITAIDQDKGRPRGIGYTIVSGNTNSIFALDYISGVLTLNGLLDRENPLYSHGFILTVKGTELNDDRTPSDATVTTTFNILVIDINDNAPEFNSSEYSVAITELAQVGFALPLFIQVVDKDENLGLNSMFEVYLVGNNSHHFIISPTSVQGKADIRIRVAIPLDYETVDRYDFDLFANESVPDHVGYAKVKITLINENDNRPIFSQPLYNISLYENVTVGTSVLTVLATDNDAGTFGEVSYFFSDDPDRFSLDKDTGLIMLIARLDYELIQRFTLTIIARDGGGEETTGRVRINVLDVNDNVPTFQKDAYVGALRENEPSVTQLVRLRATDEDSPPNNQITYSIVSASAFGSYFDISLYEGYGVISVSRPLDYEQISNGLIYLTVMAMDAGNPPLNSTVPVTIEVFDENDNPPTFSKPAYFVSVVENIMAGATVLFLNATDLDRSREYGQESIIYSLEGSTQFRINARSGEITTTSLLDRETKSEYILIVRAVDGGVGHNQKTGIATVNITLLDINDNHPTWKDAPYYINLVEMTPPDSDVTTVVAVDPDLGENGTLVYSIQPPNKFYSLNSTTGKIRTTHAMLDRENPDPHEAELMRKIVVSVTDCGRPPLKATSSATVFVNLLDLNDNDPTFQNLPFVAEVLEGIPAGVSIYQVVAIDLDEGLNGLVSYRMPVGMPRMDFLINSSSGVVVTTTELDRERIAEYQLRVVASDAGTPTKSSTSTLTIHVLDVNDETPTFFPAVYNVSVSEDVPREFRVVWLNCTDNDVGLNAELSYFITGGNVDGKFSVGYRDAVVRTVVGLDRETTAAYMLILEAIDNGPVGKRHTGTATVFVTVLDVNDNRPIFLQSSYEASVPEDIPEGHSILQLKATDADEGEFGRVWYRILHGNHGNNFRIHVSNGLLMRGPRPLDRERNSSHVLIVEAYNHDLGPMRSSVRVIVYVEDINDEAPVFTQQQYSRLGLRETAGIGTSVIVVQATDRDSGDGGLVNYRILSGAEGKFEIDESTGLIITVNYLDYETKTSYMMNVSATDQAPPFNQGFCSVYITLLNELDEAVQFSNASYEAAILENLALGTEIVRVQAYSIDNLNQITYRFNAYTSTQAKALFKIDAITGVITVQGLVDREKGDFYTLTVVADDGGPKVDSTVKVYITVLDENDNSPRFDFTSDSAVSIPEDCPVGQRVATVKAWDPDAGSNGQVVFSLASGNIAGAFEIVTTNDSIGEVFVARPLDREELDHYILQVVASDRGTPPRKKDHILQVTILDINDNPPVIESPFGYNVSVNENVGGGTAVVQVRATDRDIGINSVLSYYITEGNKDMAFRMDRISGEIATRPAPPDRERQSFYHLVATVEDEGTPTLSATTHVYVTIVDENDNAPMFQQPHYEVLLDEGPDTLNTSLITIQALDLDEGPNGTVTYAIVAGNIVNTFRIDRHMGVITAAKELDYEISHGRYTLIVTATDQCPILSHRLTSTTTVLVNVNDINDNVPTFPRDYEGPFEVTEGQPGPRVWTFLAHDRDSGPNGQVEYSIMDGDPLGEFVISPVEGVLRVRKDVELDRETIAFYNLTICARDRGMPPLSSTMLVGIRVLDINDNDPVLLNLPMNITISENSPVSSFVAHVLASDADSGCNARLTFNITAGNRERAFFINATTGIVTVNRPLDRERIPEYKLTISVKDNPENPRIARRDYDLLLIFLSDENDNHPLFTKSTYQAEVMENSPAGTPLTVLNGPILALDADQDIYAVVTYQLLGAQSGLFDINSSTGVVTVRSGVIIDREAFSPPILELLLLAEDIGLLNSTAHLLITILDDNDNRPTFSPATLTVHLLENCPPGFSVLQVTATDEDSGLNGELVYRIEAGAQDRFLIHLVTGVIRVGNATIDREEQESYRLTVVATDRGTVPLSGTAIVTILIDDINDSRPEFLNPIQTVSVLESAEPGTVIANITAIDHDLNPKLEYHIVGIVAKDDTDRLVPNQEDAFAVNINTGSVMVKSPMNRELVATYEVTLSVIDNASDLPERSVSVPNAKLTVNVLDVNDNTPQFKPFGITYYMERILEGATPGTTLIAVAAVDPDKGLNGLVTYTLLDLVPPGYVQLEDSSAGKVIANRTVDYEEVHWLNFTVRASDNGSPPRAAEIPVYLEIVDINDNNPIFDQPSYQEAVFEDVPVGTIILTVTATDADSGNFALIEYSLGDGESKFAINPTTGDIYVLSSLDREKKDHYILTALAKDNPGDVASNRRENSVQVVIQVLDVNDCRPQFSKPQFSTSVYENEPAGTSVITMMATDQDEGPNGELTYSLEGPGVEAFHVDMDSGLVTTQRPLQSYEKFSLTVVATDGGEPPLWGTTMLLVEVIDVNDNRPVFVRPPNGTILHIREEIPLRSNVYEVYATDKDEGLNGAVRYSFLKTAGNRDWEFFIIDPISGLIQTAQRLDRESQAVYSLILVASDLGQPVPYETMQPLQVALEDIDDNEPLFVRPPKGSPQYQLLTVPEHSPRGTLVGNVTGAVDADEGPNAIVYYFIAAGNEEKNFHLQPDGCLLVLRDLDREREAIFSFIVKASSNRSWTPPRGPSPTLDLVADLTLQEVRVVLEDINDQPPRFTKAEYTAGVATDAKVGSELIQVLALDADIGNNSLVFYSILAIHYFRALANDSEDVGQVFTMGSMDGILRTFDLFMAYSPGYFVVDIVARDLAGHNDTAIIGIYILRDDQRVKIVINEIPDRVRGFEEEFIHLLSNITGAIVNTDNVQFHVDKKGRVNFAQTELLIHVVNRDTNRILDVDRVIQMIDENKEQLRNLFRNYNVLDVQPAISVRLPDDMSALQMAIIVLAILLFLAAMLFVLMNWYYRTVHKRKLKAIVAGSAGNRGFIDIMDMPNTNKYSFDGANPVWLDPFCRNLELAAQAEHEDDLPENLSEIADLWNSPTRTHGTFGREPAAVKPDDDRYLRAAIQEYDNIAKLGQIIREGPIKGSLLKVVLEDYLRLKKLFAQRMVQKASSCHSSISELIQTELDEEPGDHSPGQGSLRFRHKPPVELKGPDGIHVVHGSTGTLLATDLNSLPEEDQKGLGRSLETLTAAEATAFERNARTESAKSTPLHKLRDVIMETPLEITEL.

The first 23 residues, 1–23 (MGRHVATSCHVAWLLVLISGCWG), serve as a signal peptide directing secretion. At 24 to 3064 (QVNRLPFFTN…SVRLPDDMSA (3041 aa)) the chain is on the extracellular side. Cadherin domains follow at residues 34–132 (HFFD…APTF), 133–236 (HNQP…DPIF), 237–348 (INLP…APEF), 349–460 (NSSE…RPIF), 461–561 (SQPL…VPTF), 562–671 (QKDA…PPTF), 672–784 (SKPA…APYY), 779–890 (KDAP…DPTF), 891–995 (QNLP…TPTF), 996–1102 (FPAV…RPIF), 1103–1208 (LQSS…APVF), 1210–1313 (QQQY…AVQF), 1314–1418 (SNAS…SPRF), 1420–1527 (FTSD…PPVI), 1529–1634 (SPFG…APMF), 1635–1744 (QQPH…VPTF), 1745–1851 (PRDY…DPVL), 1852–1959 (LNLP…HPLF), 1960–2069 (TKST…RPTF), 2070–2174 (SPAT…RPEF), 2175–2293 (LNPI…TPQF), 2297–2402 (GITY…NPIF), 2403–2509 (DQPS…RPQF), 2510–2611 (SKPQ…RPVF), 2614–2722 (PPNG…EPLF), 2729–2846 (SPQY…PPRF), and 2847–2975 (TKAE…EEEF). Asn-155 and Asn-206 each carry an N-linked (GlcNAc...) asparagine glycan. N-linked (GlcNAc...) asparagine glycosylation is found at Asn-349, Asn-393, Asn-434, Asn-466, Asn-472, Asn-652, Asn-694, Asn-765, Asn-810, Asn-827, Asn-941, Asn-1001, Asn-1018, Asn-1171, Asn-1282, Asn-1315, Asn-1473, Asn-1534, Asn-1651, Asn-1667, Asn-1818, Asn-1857, Asn-1889, Asn-1902, Asn-2013, Asn-2050, Asn-2129, Asn-2168, Asn-2195, Asn-2263, Asn-2357, and Asn-2369. N-linked (GlcNAc...) asparagine glycans are attached at residues Asn-2616, Asn-2749, Asn-2808, Asn-2877, Asn-2896, Asn-2941, and Asn-2981. A helical membrane pass occupies residues 3065 to 3085 (LQMAIIVLAILLFLAAMLFVL). At 3086-3354 (MNWYYRTVHK…METPLEITEL (269 aa)) the chain is on the cytoplasmic side.

As to quaternary structure, antiparallel heterodimer with PCDH15. Interacts with USH1C and USH1G. As to expression, particularly strong expression in the retina. Found also in the cochlea.

It is found in the cell membrane. Its function is as follows. Cadherins are calcium-dependent cell adhesion proteins. They preferentially interact with themselves in a homophilic manner in connecting cells. CDH23 is required for establishing and/or maintaining the proper organization of the stereocilia bundle of hair cells in the cochlea and the vestibule during late embryonic/early postnatal development. It is part of the functional network formed by USH1C, USH1G, CDH23 and MYO7A that mediates mechanotransduction in cochlear hair cells. Required for normal hearing. The chain is Cadherin-23 from Homo sapiens (Human).